The chain runs to 1063 residues: Retinoblastoma-like protein 1 (1063 aa).

Thr332, Thr369, and Thr385 each carry phosphothreonine. The segment at 383 to 584 (VTTPVASATQ…WEALHASANR (202 aa)) is domain A. Residues 383 to 944 (VTTPVASATQ…GRVKSFALKY (562 aa)) form a pocket; binds T and E1A region. The tract at residues 585 to 779 (VPSCEEVIFP…AQDAHLTGVS (195 aa)) is spacer. Residues Ser640, Ser650, Ser748, and Ser761 each carry the phosphoserine modification. The domain B stretch occupies residues 780-944 (KPKRTGSLAL…GRVKSFALKY (165 aa)). Residues Ser959, Ser970, and Ser983 each carry the phosphoserine modification. The residue at position 992 (Thr992) is a Phosphothreonine. A phosphoserine mark is found at Ser1004 and Ser1036.

It belongs to the retinoblastoma protein (RB) family. In terms of assembly, component of the DREAM complex (also named LINC complex) at least composed of E2F4, E2F5, LIN9, LIN37, LIN52, LIN54, MYBL1, MYBL2, RBL1, RBL2, RBBP4, TFDP1 and TFDP2. The complex exists in quiescent cells where it represses cell cycle-dependent genes. It dissociates in S phase when LIN9, LIN37, LIN52 and LIN54 form a subcomplex that binds to MYBL2. Interacts with AATF. Interacts with KDM5A. Interacts with KMT5B and KMT5C. Interacts with USP4. Interacts with RBBP9. In terms of processing, cell-cycle arrest properties are inactivated by phosphorylation on Thr-332, Ser-640, Ser-959 and Ser-970 by CDK4. As to expression, highly expressed in fetal heart and liver. Expressed at low levels in all other fetal tissues except skeletal muscle. High levels in neonatal spleen and thymus with low levels in other tissues. In adult, highly expressed in testis. Barely detectable in other tissues.

The protein localises to the nucleus. Functionally, key regulator of entry into cell division. Directly involved in heterochromatin formation by maintaining overall chromatin structure and, in particular, that of constitutive heterochromatin by stabilizing histone methylation. Recruits and targets histone methyltransferases KMT5B and KMT5C, leading to epigenetic transcriptional repression. Controls histone H4 'Lys-20' trimethylation. Probably acts as a transcription repressor by recruiting chromatin-modifying enzymes to promoters. Potent inhibitor of E2F-mediated trans-activation. May act as a tumor suppressor. The sequence is that of Retinoblastoma-like protein 1 (Rbl1) from Mus musculus (Mouse).